A 185-amino-acid chain; its full sequence is Adenine phosphoribosyltransferase (185 aa).

This sequence belongs to the purine/pyrimidine phosphoribosyltransferase family.

It is found in the cytoplasm. The catalysed reaction is AMP + diphosphate = 5-phospho-alpha-D-ribose 1-diphosphate + adenine. Its pathway is purine metabolism; AMP biosynthesis via salvage pathway; AMP from adenine: step 1/1. Catalyzes a salvage reaction resulting in the formation of AMP, that is energically less costly than de novo synthesis. This Caenorhabditis elegans protein is Adenine phosphoribosyltransferase (aprt-1).